A 435-amino-acid chain; its full sequence is NADH-quinone oxidoreductase subunit D (435 aa).

It belongs to the complex I 49 kDa subunit family. In terms of assembly, NDH-1 is composed of 14 different subunits. Subunits NuoB, C, D, E, F, and G constitute the peripheral sector of the complex.

Its subcellular location is the cell inner membrane. It carries out the reaction a quinone + NADH + 5 H(+)(in) = a quinol + NAD(+) + 4 H(+)(out). Functionally, NDH-1 shuttles electrons from NADH, via FMN and iron-sulfur (Fe-S) centers, to quinones in the respiratory chain. The immediate electron acceptor for the enzyme in this species is believed to be ubiquinone. Couples the redox reaction to proton translocation (for every two electrons transferred, four hydrogen ions are translocated across the cytoplasmic membrane), and thus conserves the redox energy in a proton gradient. This is NADH-quinone oxidoreductase subunit D from Xylella fastidiosa (strain 9a5c).